The following is an 82-amino-acid chain: U7-hexatoxin-Mg1a (82 aa).

The signal sequence occupies residues 1 to 26; the sequence is MRTIVFLIVSILLLSSAVLMLAEGNA. Residues 27 to 44 constitute a propeptide that is removed on maturation; the sequence is ASHELQEYPIEESLEEQR. 4 disulfide bridges follow: cysteine 46-cysteine 62, cysteine 51-cysteine 67, cysteine 61-cysteine 77, and cysteine 69-cysteine 75. At arginine 80 the chain carries Arginine amide.

The protein belongs to the rTX family. In terms of tissue distribution, expressed by the venom gland.

It localises to the secreted. In terms of biological role, induces flaccid paralysis when injected into lepidopteran larvae. Intracranial injection into mice causes awkwardness of movement and laboured respiration until death. This chain is U7-hexatoxin-Mg1a, found in Macrothele gigas (Japanese funnel web spider).